We begin with the raw amino-acid sequence, 311 residues long: Pyrimidine-specific ribonucleoside hydrolase RihA (311 aa).

The active site involves His-240.

This sequence belongs to the IUNH family. RihA subfamily.

Functionally, hydrolyzes with equal efficiency cytidine or uridine to ribose and cytosine or uracil, respectively. In Escherichia coli O45:K1 (strain S88 / ExPEC), this protein is Pyrimidine-specific ribonucleoside hydrolase RihA.